A 917-amino-acid chain; its full sequence is MIASHLLAYFFTELNHDQVQKVDQYLYHMRLSDETLLEISKRFRKEMEKGLGATTHPTAAVKMLPTFVRSTPDGTEHGEFLALDLGGTNFRVLWVKVTDNGLQKVEMENQIYAIPEDIMRGSGTQLFDHIAECLANFMDKLQIKDKKLPLGFTFSFPCHQTKLDESFLVSWTKGFKSSGVEGRDVVALIRKAIQRRGDFDIDIVAVVNDTVGTMMTCGYDDHNCEIGLIVGTGSNACYMEEMRHIDMVEGDEGRMCINMEWGAFGDDGSLNDIRTEFDQEIDMGSLNPGKQLFEKMISGMYMGELVRLILVKMAKEELLFGGKLSPELLNTGRFETKDISDIEGEKDGIRKAREVLMRLGLDPTQEDCVATHRICQIVSTRSASLCAATLAAVLQRIKENKGEERLRSTIGVDGSVYKKHPHFAKRLHKTVRRLVPGCDVRFLRSEDGSGKGAAMVTAVAYRLADQHRARQKTLEHLQLSHDQLLEVKRRMKVEMERGLSKETHASAPVKMLPTYVCATPDGTEKGDFLALDLGGTNFRVLLVRVRNGKWGGVEMHNKIYAIPQEVMHGTGDELFDHIVQCIADFLEYMGMKGVSLPLGFTFSFPCQQNSLDESILLKWTKGFKASGCEGEDVVTLLKEAIHRREEFDLDVVAVVNDTVGTMMTCGFEDPHCEVGLIVGTGSNACYMEEMRNVELVEGEEGRMCVNMEWGAFGDNGCLDDFRTEFDVAVDELSLNPGKQRFEKMISGMYLGEIVRNILIDFTKRGLLFRGRISERLKTRGIFETKFLSQIESDCLALLQVRAILQHLGLESTCDDSIIVKEVCTVVARRAAQLCGAGMAAVVDRIRENRGLDALKVTVGVDGTLYKLHPHFAKVMHETVKDLAPKCDVSFLQSEDGSGKGAALITAVACRIREAGQR.

At Met1 the chain carries N-acetylmethionine. A mitochondrial-binding peptide (MBP) region spans residues 1–16 (MIASHLLAYFFTELNH). Hexokinase domains follow at residues 16-458 (HDQV…MVTA) and 464-906 (ADQH…LITA). Residues Arg30 and 84–89 (DLGGTN) contribute to the ATP site. Residues 73–207 (DGTEHGEFLA…DFDIDIVAVV (135 aa)) form a hexokinase small subdomain 1 region. 84 to 88 (DLGGT) is a D-glucose 6-phosphate binding site. Residues 155–156 (SF), 172–173 (TK), and 208–209 (ND) contribute to the D-glucose site. The tract at residues 208–447 (NDTVGTMMTC…CDVRFLRSED (240 aa)) is hexokinase large subdomain 1. D-glucose 6-phosphate contacts are provided by Asp209 and Thr232. D-glucose is bound by residues Asn235, Glu260, and 291–294 (QLFE). Residue 413 to 415 (DGS) coordinates D-glucose 6-phosphate. 425-426 (KR) contacts ATP. D-glucose 6-phosphate contacts are provided by residues Ser449 and 532–536 (DLGGT). The tract at residues 521 to 655 (DGTEKGDFLA…EFDLDVVAVV (135 aa)) is hexokinase small subdomain 2. 532–537 (DLGGTN) lines the ATP pocket. D-glucose is bound by residues 603 to 604 (SF), 620 to 621 (TK), and 656 to 657 (ND). The interval 656–895 (NDTVGTMMTC…CDVSFLQSED (240 aa)) is hexokinase large subdomain 2. The D-glucose 6-phosphate site is built by Asp657 and Thr680. Residue Thr680 participates in ATP binding. Residues 682–683 (SN), Glu708, and 739–742 (QRFE) each bind D-glucose. Residues 747 to 748 (GM), 784 to 788 (TKFLS), and 863 to 867 (TLYKL) each bind ATP. Residues 861 to 863 (DGT) and Ser897 contribute to the D-glucose 6-phosphate site.

This sequence belongs to the hexokinase family. As to quaternary structure, monomer. Interacts with TIGAR; the interaction increases hexokinase activity in a hypoxia- and HIF1A-dependent manner. As to expression, predominant hexokinase isozyme expressed in insulin-responsive tissues such as skeletal muscle.

It localises to the mitochondrion outer membrane. It is found in the cytoplasm. The protein resides in the cytosol. The enzyme catalyses a D-hexose + ATP = a D-hexose 6-phosphate + ADP + H(+). It catalyses the reaction D-fructose + ATP = D-fructose 6-phosphate + ADP + H(+). The catalysed reaction is D-glucose + ATP = D-glucose 6-phosphate + ADP + H(+). It functions in the pathway carbohydrate metabolism; hexose metabolism. The protein operates within carbohydrate degradation; glycolysis; D-glyceraldehyde 3-phosphate and glycerone phosphate from D-glucose: step 1/4. With respect to regulation, hexokinase activity is specifically inhibited by 2,6-disubstituted glucosamines. In terms of biological role, catalyzes the phosphorylation of hexose, such as D-glucose and D-fructose, to hexose 6-phosphate (D-glucose 6-phosphate and D-fructose 6-phosphate, respectively). Mediates the initial step of glycolysis by catalyzing phosphorylation of D-glucose to D-glucose 6-phosphate. Plays a key role in maintaining the integrity of the outer mitochondrial membrane by preventing the release of apoptogenic molecules from the intermembrane space and subsequent apoptosis. The chain is Hexokinase-2 from Homo sapiens (Human).